A 446-amino-acid chain; its full sequence is Maltoporin (446 aa).

Residues 1-25 (MMTTLRKLPLAVAVAAGMMSVQAMA) form the signal peptide.

Belongs to the porin LamB (TC 1.B.3) family. In terms of assembly, homotrimer formed of three 18-stranded antiparallel beta-barrels, containing three independent channels.

It is found in the cell outer membrane. The enzyme catalyses beta-maltose(in) = beta-maltose(out). Its function is as follows. Involved in the transport of maltose and maltodextrins. The polypeptide is Maltoporin (Escherichia fergusonii (strain ATCC 35469 / DSM 13698 / CCUG 18766 / IAM 14443 / JCM 21226 / LMG 7866 / NBRC 102419 / NCTC 12128 / CDC 0568-73)).